A 559-amino-acid chain; its full sequence is 2-isopropylmalate synthase (559 aa).

Residues 30 to 304 form the Pyruvate carboxyltransferase domain; that stretch reads PLWAAVDLRD…DPGIDFSRMK (275 aa). Residues Asp39, His243, His245, and Asn279 each contribute to the Mg(2+) site. Residues 436 to 559 are regulatory domain; sequence VPMGWVLRSY…ETSEQLIANS (124 aa).

It belongs to the alpha-IPM synthase/homocitrate synthase family. LeuA type 2 subfamily. In terms of assembly, homodimer. The cofactor is Mg(2+).

The protein resides in the cytoplasm. The catalysed reaction is 3-methyl-2-oxobutanoate + acetyl-CoA + H2O = (2S)-2-isopropylmalate + CoA + H(+). The protein operates within amino-acid biosynthesis; L-leucine biosynthesis; L-leucine from 3-methyl-2-oxobutanoate: step 1/4. In terms of biological role, catalyzes the condensation of the acetyl group of acetyl-CoA with 3-methyl-2-oxobutanoate (2-ketoisovalerate) to form 3-carboxy-3-hydroxy-4-methylpentanoate (2-isopropylmalate). The sequence is that of 2-isopropylmalate synthase from Alcanivorax borkumensis (strain ATCC 700651 / DSM 11573 / NCIMB 13689 / SK2).